A 461-amino-acid polypeptide reads, in one-letter code: Protein-serine O-palmitoleoyltransferase porcupine (461 aa).

Topologically, residues 1–17 are cytoplasmic; the sequence is MATFSRQEFFQQLLQGC. A helical membrane pass occupies residues 18–38; that stretch reads LLPTAQQGLDQIWLLLAICLA. Topologically, residues 39-66 are extracellular; sequence CRLLWRLGLPSYLKHASTVAGGFFSLYH. A helical transmembrane segment spans residues 67–87; the sequence is FFQLHMVWVVLLSLLCYLVLF. Residues 88–95 are Cytoplasmic-facing; that stretch reads LCRHSSHR. The helical transmembrane segment at 96–116 threads the bilayer; the sequence is GVFLSVTILIYLLMGEMHMVD. Residues 117–152 lie on the Extracellular side of the membrane; the sequence is TVTWHKMRGAQMIVAMKAVSLGFDLDRGEVGTVPSP. The chain crosses the membrane as a helical span at residues 153 to 173; that stretch reads VEFMGYLYFVGTIVFGPWISF. The Cytoplasmic portion of the chain corresponds to 174–198; the sequence is HSYLQAVQGRPLSCRWLQKVARSLA. Cys-187 is lipidated: S-palmitoyl cysteine. The helical transmembrane segment at 199 to 219 threads the bilayer; the sequence is LALLCLVLSTCVGPYLFPYFI. Over 220-252 the chain is Extracellular; the sequence is PLNGDRLLRNKKRKARGTMVRWLRAYESAVSFH. The helical transmembrane segment at 253-273 threads the bilayer; sequence FSNYFVGFLSEATATLAGAGF. The Cytoplasmic portion of the chain corresponds to 274 to 337; the sequence is TEEKDHLEWD…SAVLVTYAAS (64 aa). A helical transmembrane segment spans residues 338 to 358; sequence ALLHGFSFHLAAVLLSLAFIT. His-341 is a catalytic residue. At 359–396 the chain is on the extracellular side; that stretch reads YVEHVLRKRLARILSACVLSKRCPPDCSHQHRLGLGVR. A helical membrane pass occupies residues 397 to 417; that stretch reads ALNLLFGALAIFHLAYLGSLF. The Cytoplasmic segment spans residues 418 to 461; it reads DVDVDDTTEEQGYGMAYTVHKWSELSWASHWVTFGCWIFYRLIG.

The protein belongs to the membrane-bound acyltransferase family. Porcupine subfamily. As to quaternary structure, interacts with WNT1, WNT3, WNT3A, WNT4, WNT5A, WNT5B, WNT6, WNT7A and WNT7B. As to expression, isoform 1 is expressed in fetal brain, brain, amygdala, caudate nucleus, cerebellum, hippocampus, pituitary, thalamus, heart, skeletal muscle and testis. Isoform 4 is expressed in amygdala, corpus callosum, hippocampus, spinal cord, kidney, liver, lung, spleen, uterus, testis. Isoform 2 and isoform 3 are expressed in substantia negra, spinal cord, heart and lung.

The protein resides in the endoplasmic reticulum membrane. It carries out the reaction [Wnt protein]-L-serine + (9Z)-hexadecenoyl-CoA = [Wnt protein]-O-(9Z)-hexadecenoyl-L-serine + CoA. Protein-serine O-palmitoleoyltransferase that acts as a key regulator of the Wnt signaling pathway by mediating the attachment of palmitoleate, a 16-carbon monounsaturated fatty acid (C16:1(9Z)), to Wnt proteins. Serine palmitoleoylation of WNT proteins is required for efficient binding to frizzled receptors. This chain is Protein-serine O-palmitoleoyltransferase porcupine, found in Homo sapiens (Human).